The following is a 2224-amino-acid chain: MLKSAASSLRRRRPKTTITATLAIEMPSQPKLASLLAVLVLLCYCDSCFFCYADANLQQQNSIVQQQQLQAPRFTTHPSSSGSIVSEGSTKILQCHALGYPQPTYRWLKDGVPVGDFSSSQFYRFHSTRREDAGSYQCIARNDAGSIFSEKSDVVVAYMGIFENTTEGRLTVISGHPAIFDMPPIESIPVPSVMWQSEDGPLNYDIKYAFTHANQLIILSADENDRKGYRAKAINTQLGKEESSAFVHLNVSGDPYIEVAPEIIVRPQDVKVKVGTGVVELQCIANARPLHELETLWLKDGLAVETAGVRHTLNDPWNRTLALLQANSSHSGEYTCQVRLRSGGYPAVSASARLQILEPPLFFTPMRAETFGEFGGQVQLTCDVVGEPTPQVKWFRNAESVDAHIESGRYTLNTDNTLVIKKLILDDAAMFQCLAINEAGENSASTWLRVKTSAPIMELPPQNVTALDGKDATISCRAVGSPNPNITWIYNETQLVDISSRVQILESGDLLISNIRSVDAGLYICVRANEAGSVKGEAYLSVLVRTQIIQPPVDTTVLLGLTATLQCKVSSDPSVPYNIDWYREGQSSTPISNSQRIGVQADGQLEIQAVRASDVGSYACVVTSPGGNETRAARLSVIELPFPPSNVKVERLPEPQQRSINVSWTPGFDGNSPISKFIIQRREVSELEKFVGPVPDPLLNWITELSNVSADQRWILLENLKAATVYQFRVSAVNRVGEGSPSEPSNVVELPQEAPSGPPVGFVGSARSMSEIITQWQPPLEEHRNGQILGYILRYRLFGYNNVPWSYQNITNEAQRNFLIQELITWKDYIVQIAAYNNMGVGVYTEGSKIKTKEGVPEAPPTNVKVEAINSTAARCRWTPPNPQQINGINQGYKIQAWQRRLIDGEWRDIERRMKTVPPSLIDPLAEQTAILGGLEKFTEYNISVLCFTDPGDGVASSQVAVMTMDDVPDEVTGLHFDDVSDRSVKVLWAPPRASNGILTGYTVRYQVKDRPDTLKSFNLTADDTELTVNQLQATTHYWFEIVAWTRVGSGIPKTATIQSGVEPVLPHAPTALALSNIEAFSVVLQFTPGFDGNSSITKWKVEGQTARNMTWFTICEINDPDAETLTVTGLVPFTQYRLRLSASNVVGSSKPSEATKDFQTIQARPKHPPFNVTVRAMSAQQLRVRWIPLQQTEWYGNPRGYNISYKQLVKTPGTIKYVPRSVVIEDHTANSHVLDSLEEWTLYEVKMNACNDVGCSKESDTAVERTREAVPSYGPLDVQANATSSTTVVVQWGEVPRQHRNGQIDGYKVFYAAADRGQQVLHKTIPNNATFTTTLTELKKYVVYHVQVLAYTRLGNGALSTPPIRVQTFEDTPGVPSNVSFPDVSLTMARIIWDVPVDPNGKILAYQVTYTLNGSAMLNYSREFPPSDRTFRATELLPGKYYSFSCTAQTRLGWGKIATALVYTTNNRERPQAPSVPQISRSQIQAHQITFSWTPGRDGFAPLRYYTVEMRENEGRWQPLPERVDPSLSSFTAVGLRPYMTYQFRIQATNDLGPSAFSRESVIVRTLPAAPAVGVGGLKVVPITTTSVRVQWSALETALWNGDASTGGYRILYQQLSDFPTALQSTPKTDVHGINENSVVLSDLQQDRNYEIVVLPFNSQGPGPATPPAAVYVGEAVPTGEPRAVDAAPISSTEVRLLWKPPKQSMQNGDILGYKIYYLVTYSPQALEPGRKWEEEIEVVSATATSHSLVFLDKFTEYRIQLLAFNPAGDGPRSAPITVKTLPGVPSAPLHLRFSDITMQSLEVTWDPPKFLNGEILGYLVTYETTEENEKFSKQVKQKVSNTTLRVQNLEEEVTYTFTVRAQTSVDYGPGISENVTTGPQDGSPVAPRDLILTKTLSSVEMHWINGPSGRGPILGYLIEAKKRDDSRWTKIEQTRKGMMQDFTVSYHILMPSTAYTFRVIAYNRYGISFPVYSKDSILTPSKLHLEYGYLQHKPFYRQTWFMVSLAATSIVIIVMVIAVLCVKSKSYKYKQEAQKTLEESMAMSIDERQELALELYRSRHGVGTGTLNSVGTLRSGTLGTLGRKSTSRPPPGVHLGKSPPRPSPASVAYHSDEESLKCYDENPDDSSVTEKPSEVSSSEASQHSESENESVRSDPHSFVNHYANVNDSLRQSWKKTKPVRNYSSYTDSEPEGSAVMSLNGGQIIVNNMARSRAPLPGFSSFV.

The N-terminal stretch at 1 to 47 (MLKSAASSLRRRRPKTTITATLAIEMPSQPKLASLLAVLVLLCYCDS) is a signal peptide. At 48-2001 (CFFCYADANL…LQHKPFYRQT (1954 aa)) the chain is on the extracellular side. The 84-residue stretch at 72–155 (PRFTTHPSSS…SIFSEKSDVV (84 aa)) folds into the Ig-like C2-type 1 domain. Cys-95 and Cys-138 are joined by a disulfide. N-linked (GlcNAc...) asparagine glycosylation is found at Asn-164, Asn-250, Asn-318, and Asn-327. Ig-like C2-type domains are found at residues 261 to 355 (PEII…ARLQ), 359 to 445 (PPLF…NSAS), 455 to 541 (PIME…AYLS), and 546 to 636 (TQII…ARLS). Intrachain disulfides connect Cys-283–Cys-336 and Cys-382–Cys-433. 3 N-linked (GlcNAc...) asparagine glycosylation sites follow: Asn-463, Asn-485, and Asn-491. 2 cysteine pairs are disulfide-bonded: Cys-476-Cys-525 and Cys-567-Cys-620. 16 N-linked (GlcNAc...) asparagine glycosylation sites follow: Asn-628, Asn-661, Asn-707, Asn-809, Asn-870, Asn-942, Asn-1019, Asn-1094, Asn-1109, Asn-1172, Asn-1203, Asn-1282, Asn-1329, Asn-1379, Asn-1414, and Asn-1420. 13 consecutive Fibronectin type-III domains span residues 643-753 (PPSN…LPQE), 758-855 (PPVG…TKEG), 860-967 (PPTN…TMDD), 971-1065 (EVTG…VEPV), 1069-1164 (APTA…TIQA), 1169-1270 (PPFN…TREA), 1275-1372 (GPLD…TFED), 1376-1469 (VPSN…TNNR), 1474-1570 (APSV…TLPA), 1575-1677 (GVGG…VGEA), 1682-1785 (EPRA…TLPG), 1789-1883 (APLH…GPQD), and 1885-1984 (SPVA…TPSK). Residues Asn-1843 and Asn-1876 are each glycosylated (N-linked (GlcNAc...) asparagine). Residues 2002-2022 (WFMVSLAATSIVIIVMVIAVL) traverse the membrane as a helical segment. Topologically, residues 2023 to 2224 (CVKSKSYKYK…APLPGFSSFV (202 aa)) are cytoplasmic. Disordered regions lie at residues 2068–2157 (TLNS…RSDP) and 2171–2195 (LRQS…PEGS). A Phosphoserine modification is found at Ser-2071. A compositionally biased stretch (low complexity) spans 2073–2085 (GTLRSGTLGTLGR). Residue Thr-2074 is modified to Phosphothreonine. Basic and acidic residues-rich tracts occupy residues 2112 to 2122 (HSDEESLKCYD) and 2144 to 2157 (QHSE…RSDP). Phosphoserine is present on residues Ser-2113 and Ser-2117.

Belongs to the sidekick family.

Its subcellular location is the membrane. In terms of biological role, participates in homotypic or heterotypic interactions in the eye during pattern formation to prevent extra cells from joining the precluster and differentiating as photoreceptor cells. The protein is Protein sidekick of Drosophila melanogaster (Fruit fly).